The sequence spans 261 residues: uncharacterized protein (261 aa).

This is an uncharacterized protein from Enterobacteriaceae (Bacteriophage P2).